A 394-amino-acid chain; its full sequence is Phosphoglycerate kinase (394 aa).

Residues 21-23 (DFN), arginine 36, 59-62 (HLGR), arginine 118, and arginine 151 contribute to the substrate site. Serine 183 carries the post-translational modification Phosphoserine. The ATP site is built by lysine 201 and glycine 292. At threonine 299 the chain carries Phosphothreonine. ATP is bound by residues glutamate 323 and 350–353 (GGDS).

It belongs to the phosphoglycerate kinase family. In terms of assembly, monomer.

Its subcellular location is the cytoplasm. It catalyses the reaction (2R)-3-phosphoglycerate + ATP = (2R)-3-phospho-glyceroyl phosphate + ADP. The protein operates within carbohydrate degradation; glycolysis; pyruvate from D-glyceraldehyde 3-phosphate: step 2/5. This chain is Phosphoglycerate kinase, found in Bacillus anthracis (strain A0248).